The chain runs to 153 residues: Ribosomal RNA large subunit methyltransferase H (153 aa).

Residues L63, G102, and 121-126 (FGKITL) each bind S-adenosyl-L-methionine.

The protein belongs to the RNA methyltransferase RlmH family. In terms of assembly, homodimer.

It is found in the cytoplasm. The enzyme catalyses pseudouridine(1915) in 23S rRNA + S-adenosyl-L-methionine = N(3)-methylpseudouridine(1915) in 23S rRNA + S-adenosyl-L-homocysteine + H(+). Its function is as follows. Specifically methylates the pseudouridine at position 1915 (m3Psi1915) in 23S rRNA. In Sulfurovum sp. (strain NBC37-1), this protein is Ribosomal RNA large subunit methyltransferase H.